The primary structure comprises 299 residues: 33 kDa chaperonin (299 aa).

2 disulfide bridges follow: Cys-238-Cys-240 and Cys-271-Cys-274.

The protein belongs to the HSP33 family. Post-translationally, under oxidizing conditions two disulfide bonds are formed involving the reactive cysteines. Under reducing conditions zinc is bound to the reactive cysteines and the protein is inactive.

The protein resides in the cytoplasm. Functionally, redox regulated molecular chaperone. Protects both thermally unfolding and oxidatively damaged proteins from irreversible aggregation. Plays an important role in the bacterial defense system toward oxidative stress. The protein is 33 kDa chaperonin of Alkaliphilus oremlandii (strain OhILAs) (Clostridium oremlandii (strain OhILAs)).